A 331-amino-acid polypeptide reads, in one-letter code: Hyaluronidase B (331 aa).

2 cysteine pairs are disulfide-bonded: C19-C308 and C185-C197. N79 carries N-linked (GlcNAc...) asparagine glycosylation. The active-site Proton donor is E109.

It belongs to the glycosyl hydrolase 56 family. Expressed by the venom gland.

It localises to the secreted. It carries out the reaction Random hydrolysis of (1-&gt;4)-linkages between N-acetyl-beta-D-glucosamine and D-glucuronate residues in hyaluronate.. Functionally, hydrolyzes high molecular weight hyaluronic acid to produce small oligosaccharides. The polypeptide is Hyaluronidase B (Vespa velutina (Asian yellow-legged hornet)).